A 150-amino-acid chain; its full sequence is UPF0178 protein BceJ2315_16760 (150 aa).

Belongs to the UPF0178 family.

This is UPF0178 protein BceJ2315_16760 from Burkholderia cenocepacia (strain ATCC BAA-245 / DSM 16553 / LMG 16656 / NCTC 13227 / J2315 / CF5610) (Burkholderia cepacia (strain J2315)).